The sequence spans 883 residues: Serine/threonine-protein kinase greatwall (883 aa).

The residue at position 1 (M1) is an N-acetylmethionine. A Protein kinase domain is found at 35-839; sequence FTIVKPISRG…IKELKCHPLF (805 aa). ATP contacts are provided by residues 41 to 49 and K62; that span reads ISRGAFGKV. The active-site Proton acceptor is the D156. T209 and T224 each carry phosphothreonine. Residues S295, S373, and S456 each carry the phosphoserine modification. T523 is modified (phosphothreonine). S555, S559, S634, S661, and S672 each carry phosphoserine. Residue T726 is modified to Phosphothreonine. S729 bears the Phosphoserine mark. T745 is subject to Phosphothreonine; by CDK1. One can recognise an AGC-kinase C-terminal domain in the interval 840-883; the sequence is SDVDWENLQHQTMPFIPQPDDETDTSYFEARNNAQHLTVSGFSL. S879 and S882 each carry phosphoserine.

The protein belongs to the protein kinase superfamily. AGC Ser/Thr protein kinase family. Post-translationally, phosphorylation at Thr-745 by CDK1 during M phase activates its kinase activity. Maximum phosphorylation occurs in prometaphase.

It is found in the cytoplasm. Its subcellular location is the cytoskeleton. The protein localises to the microtubule organizing center. The protein resides in the centrosome. It localises to the nucleus. The enzyme catalyses L-seryl-[protein] + ATP = O-phospho-L-seryl-[protein] + ADP + H(+). It catalyses the reaction L-threonyl-[protein] + ATP = O-phospho-L-threonyl-[protein] + ADP + H(+). In terms of biological role, serine/threonine kinase that plays a key role in M phase by acting as a regulator of mitosis entry and maintenance. Acts by promoting the inactivation of protein phosphatase 2A (PP2A) during M phase: does not directly inhibit PP2A but acts by mediating phosphorylation and subsequent activation of ARPP19 and ENSA at 'Ser-62' and 'Ser-67', respectively. ARPP19 and ENSA are phosphatase inhibitors that specifically inhibit the PPP2R2D (PR55-delta) subunit of PP2A. Inactivation of PP2A during M phase is essential to keep cyclin-B1-CDK1 activity high. Following DNA damage, it is also involved in checkpoint recovery by being inhibited. The polypeptide is Serine/threonine-protein kinase greatwall (MASTL) (Canis lupus familiaris (Dog)).